We begin with the raw amino-acid sequence, 328 residues long: Cytochrome c biogenesis protein CcsA (328 aa).

8 helical membrane passes run 13-33 (ISFSVVSIVLTIYFLTLLVNL), 46-66 (GIIITFFGITGLLLTRWIYSG), 73-93 (LYESLIFLSWAFSIIHMVSYF), 101-121 (LNTITAPSVIFIQGFATSGLL), 146-166 (MILGYGALLCGSLLSIALLVI), 234-254 (IISLGFIFLTVGILSGAVWAN), 263-283 (WDPKETWAFITWTIFAIYLHI), and 295-315 (AIVALIGFILIWICYFGVNLL).

This sequence belongs to the CcmF/CycK/Ccl1/NrfE/CcsA family. May interact with Ccs1.

The protein resides in the plastid. The protein localises to the chloroplast thylakoid membrane. Functionally, required during biogenesis of c-type cytochromes (cytochrome c6 and cytochrome f) at the step of heme attachment. This Arabidopsis thaliana (Mouse-ear cress) protein is Cytochrome c biogenesis protein CcsA.